Here is a 382-residue protein sequence, read N- to C-terminus: Putative phospholipase A1 (382 aa).

A signal peptide spans 1–27; sequence MPTMGAEMNTRNMRYILLTGLLPMASA. The Periplasmic portion of the chain corresponds to 28–65; that stretch reads FGETALQCAALTDNVTRLACYDRIFAAQLPSSAGQEGQ. A beta stranded membrane pass occupies residues 66–78; it reads ESKAVLNLTETVR. Residues 79-168 are Extracellular-facing; sequence SSLDKGEAVI…VQEKFGQQKR (90 aa). Residues 169–183 traverse the membrane as a beta stranded segment; sequence AETKLQVSFKSKIAE. Residues 184–189 are Periplasmic-facing; that stretch reads DLFKTR. Residues 190-202 form a beta stranded membrane-spanning segment; sequence ADLWFGYTQRSDW. Over 203–213 the chain is Extracellular; it reads QIYNQGRKSAP. Ser211 contributes to the Ca(2+) binding site. The beta stranded transmembrane segment at 214–233 threads the bilayer; the sequence is FRNTDYKPEIFLTQPVKADL. The Periplasmic segment spans residues 234 to 236; the sequence is PFG. A beta stranded transmembrane segment spans residues 237-250; sequence GRLRMLGAGFVHQS. His248 serves as the catalytic Proton acceptor. Ser250 serves as the catalytic Nucleophile. The Extracellular segment spans residues 251 to 259; sequence NGQSRPESR. Ser258 is a binding site for Ca(2+). A beta stranded membrane pass occupies residues 260-272; sequence SWNRIYAMAGMEW. The Periplasmic segment spans residues 273–274; that stretch reads GK. Residues 275–284 form a beta stranded membrane-spanning segment; it reads LTVIPRVWVR. Topologically, residues 285-306 are extracellular; that stretch reads AFDQSGDKNDNPDIADYMGYGD. Asp294 is a Ca(2+) binding site. A beta stranded transmembrane segment spans residues 307–313; sequence VKLQYRL. The Periplasmic segment spans residues 314–315; that stretch reads ND. Residues 316–325 form a beta stranded membrane-spanning segment; it reads RQNVYSVLRY. Topologically, residues 326–332 are extracellular; that stretch reads NPKTGYG. A beta stranded membrane pass occupies residues 333–341; that stretch reads AIEAAYTFP. The Periplasmic segment spans residues 342–346; the sequence is IKGKL. A beta stranded transmembrane segment spans residues 347–356; it reads KGVVRGFHGY. Over 357–365 the chain is Extracellular; that stretch reads GESLIDYNH. The beta stranded transmembrane segment at 366-377 threads the bilayer; it reads KQNGIGIGLMFN. At 378–382 the chain is on the periplasmic side; that stretch reads DLDGI.

Belongs to the phospholipase A1 family. As to quaternary structure, homodimer; dimerization is reversible, and the dimeric form is the active one. Ca(2+) is required as a cofactor.

The protein localises to the cell outer membrane. The enzyme catalyses a 1,2-diacyl-sn-glycero-3-phosphocholine + H2O = a 2-acyl-sn-glycero-3-phosphocholine + a fatty acid + H(+). The catalysed reaction is a 1,2-diacyl-sn-glycero-3-phosphocholine + H2O = a 1-acyl-sn-glycero-3-phosphocholine + a fatty acid + H(+). Functionally, hydrolysis of phosphatidylcholine with phospholipase A2 (EC 3.1.1.4) and phospholipase A1 (EC 3.1.1.32) activities. This Neisseria meningitidis serogroup B (strain ATCC BAA-335 / MC58) protein is Putative phospholipase A1.